The primary structure comprises 440 residues: Proline--tRNA ligase (440 aa).

Belongs to the class-II aminoacyl-tRNA synthetase family. ProS type 2 subfamily. As to quaternary structure, homodimer.

The protein resides in the cytoplasm. It catalyses the reaction tRNA(Pro) + L-proline + ATP = L-prolyl-tRNA(Pro) + AMP + diphosphate. Functionally, catalyzes the attachment of proline to tRNA(Pro) in a two-step reaction: proline is first activated by ATP to form Pro-AMP and then transferred to the acceptor end of tRNA(Pro). This Xanthobacter autotrophicus (strain ATCC BAA-1158 / Py2) protein is Proline--tRNA ligase.